The primary structure comprises 333 residues: MPPTINMGIPGASSSVTGGVSGKRVLLAEPRGYCAGVDRAVETVERALEKHGAPVYVRHEIVHNRYVVDTLAKAGAVFVEQTDEVPEGAIVVFSAHGVAPTVHVEAAARNLKTIDATCPLVTKVHNEAKRFARDDYDILLVGHEGHEEVVGTAGEAPDHVQVVDNPDAVDKVTVRDPDKVIWLSQTTLSVDETMETVRRLREKFPTLQDPPSDDICYATQNRQVAVKAMAPECELVIVVGSKNSSNSVRLVEVALGAGSDAAHLVDYAEDIDPTWLNGVTTVGVTSGASVPEVLVRGVLDRLAEYGYGTVQPVTTANETLVFALPREIRPARS.

C34 is a [4Fe-4S] cluster binding site. Residues H63 and H96 each contribute to the (2E)-4-hydroxy-3-methylbut-2-enyl diphosphate site. Dimethylallyl diphosphate-binding residues include H63 and H96. Residues H63 and H96 each contribute to the isopentenyl diphosphate site. C118 serves as a coordination point for [4Fe-4S] cluster. Residue H146 participates in (2E)-4-hydroxy-3-methylbut-2-enyl diphosphate binding. Residue H146 coordinates dimethylallyl diphosphate. Position 146 (H146) interacts with isopentenyl diphosphate. E148 (proton donor) is an active-site residue. Residue T186 participates in (2E)-4-hydroxy-3-methylbut-2-enyl diphosphate binding. C216 contacts [4Fe-4S] cluster. (2E)-4-hydroxy-3-methylbut-2-enyl diphosphate is bound by residues S244, S245, N246, and S289. The dimethylallyl diphosphate site is built by S244, S245, N246, and S289. Isopentenyl diphosphate is bound by residues S244, S245, N246, and S289.

Belongs to the IspH family. [4Fe-4S] cluster serves as cofactor.

The catalysed reaction is isopentenyl diphosphate + 2 oxidized [2Fe-2S]-[ferredoxin] + H2O = (2E)-4-hydroxy-3-methylbut-2-enyl diphosphate + 2 reduced [2Fe-2S]-[ferredoxin] + 2 H(+). The enzyme catalyses dimethylallyl diphosphate + 2 oxidized [2Fe-2S]-[ferredoxin] + H2O = (2E)-4-hydroxy-3-methylbut-2-enyl diphosphate + 2 reduced [2Fe-2S]-[ferredoxin] + 2 H(+). It participates in isoprenoid biosynthesis; dimethylallyl diphosphate biosynthesis; dimethylallyl diphosphate from (2E)-4-hydroxy-3-methylbutenyl diphosphate: step 1/1. Its pathway is isoprenoid biosynthesis; isopentenyl diphosphate biosynthesis via DXP pathway; isopentenyl diphosphate from 1-deoxy-D-xylulose 5-phosphate: step 6/6. Its function is as follows. Catalyzes the conversion of 1-hydroxy-2-methyl-2-(E)-butenyl 4-diphosphate (HMBPP) into a mixture of isopentenyl diphosphate (IPP) and dimethylallyl diphosphate (DMAPP). Acts in the terminal step of the DOXP/MEP pathway for isoprenoid precursor biosynthesis. The polypeptide is 4-hydroxy-3-methylbut-2-enyl diphosphate reductase (Mycobacterium sp. (strain KMS)).